Here is a 199-residue protein sequence, read N- to C-terminus: Transgelin-2 (199 aa).

Alanine 2 carries the post-translational modification N-acetylalanine. Phosphoserine is present on serine 11. N6-acetyllysine is present on residues lysine 17 and lysine 20. Residues 24–136 enclose the Calponin-homology (CH) domain; sequence PDLEQILIQW…RTLMNLGGLA (113 aa). A Phosphoserine modification is found at serine 163. Lysine 171 participates in a covalent cross-link: Glycyl lysine isopeptide (Lys-Gly) (interchain with G-Cter in SUMO2). The Calponin-like repeat unit spans residues 174-199; it reads IGLQMGTNRGASQAGMTGYGMPRQIL. Threonine 180 carries the post-translational modification Phosphothreonine. Residues arginine 182 and arginine 196 each carry the omega-N-methylarginine modification.

The protein belongs to the calponin family.

The protein is Transgelin-2 (Tagln2) of Rattus norvegicus (Rat).